The chain runs to 308 residues: Protein translocase subunit SecF (308 aa).

Helical transmembrane passes span A22–Y42, I140–V160, W164–F184, L194–I214, I246–A266, and V272–I292.

It belongs to the SecD/SecF family. SecF subfamily. In terms of assembly, forms a complex with SecD. Part of the essential Sec protein translocation apparatus which comprises SecA, SecYEG and auxiliary proteins SecDF-YajC and YidC.

Its subcellular location is the cell inner membrane. Part of the Sec protein translocase complex. Interacts with the SecYEG preprotein conducting channel. SecDF uses the proton motive force (PMF) to complete protein translocation after the ATP-dependent function of SecA. The polypeptide is Protein translocase subunit SecF (Rickettsia akari (strain Hartford)).